Consider the following 159-residue polypeptide: MRLHVKLKEFLSMFFMAILFFPAFNASLFFTGVKPLYSIIKCSTEIFYDWRMLILCFGFMSFSFLNIHVILLTIIKSFLIKKTKVVNFATDITIQLTLIFLLIAIVIAPLIAPFVTGYVNTNYHPCGNNTGIFPGAIYIKNGMKCNNGYISRKEDSAVK.

A run of 3 helical transmembrane segments spans residues 10 to 30 (FLSMFFMAILFFPAFNASLFF), 52 to 72 (MLILCFGFMSFSFLNIHVILL), and 96 to 116 (LTLIFLLIAIVIAPLIAPFVT).

It is found in the membrane. This is an uncharacterized protein from Escherichia coli (strain K12).